A 139-amino-acid chain; its full sequence is Nucleoside diphosphate kinase (139 aa).

K11, F59, R87, T93, R104, and N114 together coordinate ATP. Residue H117 is the Pros-phosphohistidine intermediate of the active site.

This sequence belongs to the NDK family. Homotetramer. Requires Mg(2+) as cofactor.

The protein localises to the cytoplasm. It catalyses the reaction a 2'-deoxyribonucleoside 5'-diphosphate + ATP = a 2'-deoxyribonucleoside 5'-triphosphate + ADP. It carries out the reaction a ribonucleoside 5'-diphosphate + ATP = a ribonucleoside 5'-triphosphate + ADP. In terms of biological role, major role in the synthesis of nucleoside triphosphates other than ATP. The ATP gamma phosphate is transferred to the NDP beta phosphate via a ping-pong mechanism, using a phosphorylated active-site intermediate. The sequence is that of Nucleoside diphosphate kinase from Wolbachia pipientis subsp. Culex pipiens (strain wPip).